The chain runs to 145 residues: D-aminoacyl-tRNA deacylase (145 aa).

Residues glycine 137–proline 138 carry the Gly-cisPro motif, important for rejection of L-amino acids motif.

This sequence belongs to the DTD family. As to quaternary structure, homodimer.

Its subcellular location is the cytoplasm. It catalyses the reaction glycyl-tRNA(Ala) + H2O = tRNA(Ala) + glycine + H(+). The catalysed reaction is a D-aminoacyl-tRNA + H2O = a tRNA + a D-alpha-amino acid + H(+). In terms of biological role, an aminoacyl-tRNA editing enzyme that deacylates mischarged D-aminoacyl-tRNAs. Also deacylates mischarged glycyl-tRNA(Ala), protecting cells against glycine mischarging by AlaRS. Acts via tRNA-based rather than protein-based catalysis; rejects L-amino acids rather than detecting D-amino acids in the active site. By recycling D-aminoacyl-tRNA to D-amino acids and free tRNA molecules, this enzyme counteracts the toxicity associated with the formation of D-aminoacyl-tRNA entities in vivo and helps enforce protein L-homochirality. This chain is D-aminoacyl-tRNA deacylase, found in Shewanella loihica (strain ATCC BAA-1088 / PV-4).